The chain runs to 348 residues: Trans-L-3-hydroxyproline dehydratase (348 aa).

Residue Cys-101 is the Proton acceptor of the active site. Substrate contacts are provided by residues 102–103 (GH), Asp-263, and 268–269 (GS).

This sequence belongs to the proline racemase family. Homodimer.

It carries out the reaction trans-3-hydroxy-L-proline = 1-pyrroline-2-carboxylate + H2O. Its function is as follows. Catalyzes the dehydration of trans-3-hydroxy-L-proline to delta-1-pyrroline-2-carboxylate (Pyr2C). The protein is Trans-L-3-hydroxyproline dehydratase (l3hypdh) of Xenopus tropicalis (Western clawed frog).